Here is a 679-residue protein sequence, read N- to C-terminus: Protein asunder (679 aa).

Residues 519-541 (RLKVNKTKDQYRLFYRELEQLIQ) adopt a coiled-coil conformation. The segment at 564–610 (GDASNKSDPSAAHLRSYTESPLSPERLEPTNSVNSSSSSILKASKRR) is disordered. The Nuclear localization signal (NLS) motif lies at 604 to 610 (LKASKRR).

This sequence belongs to the Integrator subunit 13 family. As to quaternary structure, belongs to the multiprotein complex Integrator, at least composed of IntS1, IntS2, IntS3, IntS4, omd/IntS5, IntS6, defl/IntS7, IntS8, IntS9, IntS10, IntS11, IntS12, asun/IntS13, IntS14 and IntS15. The core complex associates with protein phosphatase 2A subunits mts/PP2A and Pp2A-29B, to form the Integrator-PP2A (INTAC) complex. Phosphorylated.

Its subcellular location is the nucleus. The protein localises to the cytoplasm. The protein resides in the perinuclear region. Component of the integrator complex, a multiprotein complex that terminates RNA polymerase II (Pol II) transcription in the promoter-proximal region of genes. The integrator complex provides a quality checkpoint during transcription elongation by driving premature transcription termination of transcripts that are unfavorably configured for transcriptional elongation: the complex terminates transcription by (1) catalyzing dephosphorylation of the C-terminal domain (CTD) of Pol II subunit Polr2A/Rbp1 and Spt5, and (2) degrading the exiting nascent RNA transcript via endonuclease activity. The integrator complex is also involved in the 3'-end processing of the U7 snRNA, and also the spliceosomal snRNAs U1, U2, U4 and U5. This Drosophila mojavensis (Fruit fly) protein is Protein asunder (asun).